The following is a 365-amino-acid chain: 7-methylxanthine methyltransferase PCS1 (365 aa).

Position 19 (Y19) interacts with S-adenosyl-L-homocysteine. T26 lines the caffeine pocket. C62, N67, D99, L100, S134, and F135 together coordinate S-adenosyl-L-homocysteine. The caffeine site is built by Y152, H155, and W156. Mg(2+) is bound at residue N173. H221 serves as a coordination point for caffeine. Positions 259, 261, and 262 each coordinate Mg(2+). F317 serves as a coordination point for caffeine.

Belongs to the methyltransferase superfamily. Type-7 methyltransferase family. It depends on Mg(2+) as a cofactor.

It carries out the reaction 1,7-dimethylxanthine + S-adenosyl-L-methionine = caffeine + S-adenosyl-L-homocysteine + H(+). The enzyme catalyses 7-methylxanthine + S-adenosyl-L-methionine = theobromine + S-adenosyl-L-homocysteine + H(+). It functions in the pathway alkaloid biosynthesis. Its function is as follows. Involved in the biosynthesis of caffeine. Catalyzes the conversion of 7-methylxanthine (7mX) to theobromine, and, to some extent, the conversion of paraxanthine to caffeine, but seems not able to convert theobromine to caffeine. The chain is 7-methylxanthine methyltransferase PCS1 from Camellia ptilophylla (Cocoa tea).